A 345-amino-acid polypeptide reads, in one-letter code: Platelet-derived growth factor C (345 aa).

Positions 1-22 are cleaved as a signal peptide; it reads MLLLGLLLLTSALAGRRHGAAA. In terms of domain architecture, CUB spans 46-163; the sequence is HEKIITVTSN…PGFCIHYTLL (118 aa). Residue Asn55 is glycosylated (N-linked (GlcNAc...) asparagine). Intrachain disulfides connect Cys104–Cys124, Cys250–Cys294, Cys280–Cys335, and Cys287–Cys337.

It belongs to the PDGF/VEGF growth factor family. As to quaternary structure, homodimer; disulfide-linked. Interacts with PDGFRA homodimers, and with heterodimers formed by PDGFRA and PDGFRB. Post-translationally, proteolytic removal of the N-terminal CUB domain releasing the core domain is necessary for unmasking the receptor-binding epitopes of the core domain. Cleavage after basic residues in the hinge region (region connecting the CUB and growth factor domains) gives rise to the receptor-binding form.

It is found in the secreted. Functionally, growth factor that plays an essential role in the regulation of embryonic development, cell proliferation, cell migration, survival and chemotaxis. Potent mitogen and chemoattractant for cells of mesenchymal origin. Required for normal skeleton formation during embryonic development. Required for normal skin morphogenesis during embryonic development. Plays an important role in wound healing, in angiogenesis and blood vessel development. This chain is Platelet-derived growth factor C (PDGFC), found in Gallus gallus (Chicken).